The primary structure comprises 24 residues: DYE-linked aldehyde dehydrogenase, alpha chain (24 aa).

In terms of assembly, heterotetramer composed of an alpha, a beta and two gamma chains. Mo-molybdopterin cytosine dinucleotide serves as cofactor.

Its function is as follows. Active with aldehydes and formate esters as substrates. This chain is DYE-linked aldehyde dehydrogenase, alpha chain, found in Amycolatopsis methanolica.